Reading from the N-terminus, the 776-residue chain is V-set and immunoglobulin domain-containing protein 10-like 2 (776 aa).

The signal sequence occupies residues 1–28; the sequence is MVGLSAHHRPLGCRLLILFCLLHPGASG. Ig-like domains are found at residues 32–140, 150–234, 242–324, 399–498, and 500–592; these read PTSN…LYLM, PRVQ…AFLD, PVIT…TTVQ, PTLA…LRLE, and PQLT…VLLE. 5 disulfides stabilise this stretch: C56/C122, C169/C217, C268/C308, C435/C480, and C521/C576. A Fibronectin type-III domain is found at 608 to 708; that stretch reads TPPNVTISRL…EVKTPVDPAF (101 aa). Residues N611 and N637 are each glycosylated (N-linked (GlcNAc...) asparagine). A helical transmembrane segment spans residues 713 to 733; it reads AVLGAAGTGVVVALATSLLVF.

It is found in the membrane. This Mus musculus (Mouse) protein is V-set and immunoglobulin domain-containing protein 10-like 2.